The primary structure comprises 913 residues: DNA polymerase I (913 aa).

Positions 1-305 (MSQAPLVLVD…AGENGEAETP (305 aa)) constitute a 5'-3' exonuclease domain. Residues 306-501 (IQAEVDYDVV…LHQALWQKLE (196 aa)) enclose the 3'-5' exonuclease domain. Positions 505-913 (SLARVLTDIE…GVGSNWDEAH (409 aa)) are polymerase.

The protein belongs to the DNA polymerase type-A family. Single-chain monomer with multiple functions.

The enzyme catalyses DNA(n) + a 2'-deoxyribonucleoside 5'-triphosphate = DNA(n+1) + diphosphate. In addition to polymerase activity, this DNA polymerase exhibits 3'-5' and 5'-3' exonuclease activity. This is DNA polymerase I (polA) from Pseudomonas aeruginosa (strain ATCC 15692 / DSM 22644 / CIP 104116 / JCM 14847 / LMG 12228 / 1C / PRS 101 / PAO1).